The following is a 328-amino-acid chain: P2Y purinoceptor 3 (328 aa).

Residues 1–22 are Extracellular-facing; sequence MSMANFTGGRNSCTFHEEFKQV. Residue Asn5 is glycosylated (N-linked (GlcNAc...) asparagine). A helical membrane pass occupies residues 23–43; it reads LLPLVYSVVFLLGLPLNAVVI. Over 44 to 57 the chain is Cytoplasmic; the sequence is GQIWLARKALTRTT. The chain crosses the membrane as a helical span at residues 58–78; sequence IYMLNLAMADLLYVCSLPLLI. Over 79–96 the chain is Extracellular; that stretch reads YNYTQKDYWPFGDFTCKF. A disulfide bridge connects residues Cys94 and Cys172. Residues 97 to 117 form a helical membrane-spanning segment; the sequence is VRFQFYTNLHGSILFLTCISV. Residues 118–139 are Cytoplasmic-facing; the sequence is QRYMGICHPLASWHKKKGKKLT. A helical membrane pass occupies residues 140–160; sequence WLVCAAVWFIVIAQCLPTFVF. The Extracellular segment spans residues 161-189; the sequence is ASTGTQRNRTVCYDLSPPDRSTSYFPYGI. The helical transmembrane segment at 190–210 threads the bilayer; the sequence is TLTITGFLLPFAAILACYCSM. Over 211-231 the chain is Cytoplasmic; that stretch reads ARILCQKDELIGLAVHKKKDK. A helical transmembrane segment spans residues 232–252; it reads AVRMIIIVVIVFSISFFPFHL. Residues 253–275 are Extracellular-facing; sequence TKTIYLIVRSSASLPCPTLQAFA. The helical transmembrane segment at 276-298 threads the bilayer; the sequence is IAYKCTRPFASMNSVLDPILFYF. Residues 299 to 323 are Cytoplasmic-facing; it reads TQRKFRESTRYLLDKMSSKWRQDHC.

The protein belongs to the G-protein coupled receptor 1 family.

The protein resides in the cell membrane. Its function is as follows. Receptor for extracellular ADP &gt; UTP &gt; ATP = UDP. The activity of this receptor is mediated by G proteins which activate a phosphatidylinositol-calcium second messenger system. The sequence is that of P2Y purinoceptor 3 (P2RY3) from Gallus gallus (Chicken).